Reading from the N-terminus, the 158-residue chain is 6,7-dimethyl-8-ribityllumazine synthase (158 aa).

5-amino-6-(D-ribitylamino)uracil contacts are provided by residues Phe-23, 61–63 (SFE), and 85–87 (AVI). 90–91 (ET) provides a ligand contact to (2S)-2-hydroxy-3-oxobutyl phosphate. His-93 functions as the Proton donor in the catalytic mechanism. Phe-118 provides a ligand contact to 5-amino-6-(D-ribitylamino)uracil. Arg-132 lines the (2S)-2-hydroxy-3-oxobutyl phosphate pocket.

Belongs to the DMRL synthase family.

The enzyme catalyses (2S)-2-hydroxy-3-oxobutyl phosphate + 5-amino-6-(D-ribitylamino)uracil = 6,7-dimethyl-8-(1-D-ribityl)lumazine + phosphate + 2 H2O + H(+). It participates in cofactor biosynthesis; riboflavin biosynthesis; riboflavin from 2-hydroxy-3-oxobutyl phosphate and 5-amino-6-(D-ribitylamino)uracil: step 1/2. Catalyzes the formation of 6,7-dimethyl-8-ribityllumazine by condensation of 5-amino-6-(D-ribitylamino)uracil with 3,4-dihydroxy-2-butanone 4-phosphate. This is the penultimate step in the biosynthesis of riboflavin. The sequence is that of 6,7-dimethyl-8-ribityllumazine synthase from Prochlorococcus marinus (strain MIT 9515).